The chain runs to 342 residues: Aldo-keto reductase pigE (342 aa).

The first 27 residues, 1-27 (MGSISPKTRFPIVLGAGLIGSPGLFEG), serve as a signal peptide directing secretion. Asp-52 contributes to the NADP(+) binding site. Tyr-57 (proton donor) is an active-site residue. Residues Gln-182 and Arg-236 each coordinate NADP(+). A glycan (N-linked (GlcNAc...) asparagine) is linked at Asn-271.

This sequence belongs to the aldo/keto reductase family. Aldo/keto reductase 2 subfamily.

The protein operates within secondary metabolite biosynthesis. In terms of biological role, aldo-keto reductase; part of the gene cluster that mediates the biosynthesis of azaphilone pigments (MonAzPs), a complex mixture of compounds with a common azaphilone skeleton very widely used as food colorants. Within the pathway, pigE is involved in the dehydration of the C-11 alcohol followed by the reduction of the C6(7) double bond which increases the electrophilicity of the C-5 ketone of the resulting acyl benzopyran and allows the intramolecular Knoevenagel aldol condensation with the C-20 enol of the side chain to yield the characteristic linear tricyclic carbon skeletons of the yellow pigments. The first step of the pathway is performed by the nrPKS pigA that forms the hexaketide precursor from successive condensations of five malonyl-CoA units, with a simple acetyl-CoA starter unit. The role of esterase pigG is not clear, but it may play at most a supplementary role in the formation of the benzaldehyde produced by the pigA nrPKS. This very reactive benzaldehyde is intercepted by the pigC ketoreductase that to provide the first stable enzyme-free MonAzPs intermediate, 6-(4-hydroxy-2-oxopentyl)-3-methyl-2,4-dioxocyclohexane carbaldehyde, also known as M7PKS-1. The FAD-dependent monooxygenase pigN hydroxylates M7PKS-1 at C-4, which triggers the formation of the pyran ring. PigJ, pigK and pigD are involved in the acetylation of the pyran ring. PigJ and pigK form the two subunits of a dedicated fungal FAS that produces the side chain fatty acyl moiety of MonAzPs and pigD transfers the fatty acyl chain to the C-4 alcohol. PigM and pigO are involved in the elimination of the omega-1 alcohol. PigM acts as an O-acetyltransferase that synthesizes the putative O-11 acetyl intermediate whereas pigO eliminates acetic acid to yield an intermediate with a C10(11) double bond. The dehydration of the C-11 alcohol followed by the reduction of the C6(7) double bond by the NAD(P)H-dependent oxidoreductase pigE increases the electrophilicity of the C-5 ketone of the resulting acyl benzopyran. This in turn sets up the C-5 ketone for an intramolecular Knoevenagel aldol condensation with the C-20 enol of the side chain. This condensation affords the characteristic linear tricyclic carbon skeletons of the yellow pigments that serve as the common precursors for the classical yellow pigments monascin and ankaflavin, orange pigments rubopunctatin and monascorubrin, and red pigments ribropunctamine and monascorubramine. The FAD-dependent oxidoreductase pigF is especially invoved in the biosynthesis of orange and red pigments via desaturation of C6(7). This Monascus ruber (Mold) protein is Aldo-keto reductase pigE.